Reading from the N-terminus, the 551-residue chain is Formate--tetrahydrofolate ligase (551 aa).

65-72 contacts ATP; that stretch reads TPAGEGKT.

It belongs to the formate--tetrahydrofolate ligase family.

The enzyme catalyses (6S)-5,6,7,8-tetrahydrofolate + formate + ATP = (6R)-10-formyltetrahydrofolate + ADP + phosphate. Its pathway is one-carbon metabolism; tetrahydrofolate interconversion. This chain is Formate--tetrahydrofolate ligase, found in Thermosipho africanus (strain TCF52B).